The chain runs to 180 residues: Ribulose bisphosphate carboxylase small subunit, chloroplastic 2 (180 aa).

The N-terminal 54 residues, 1-54, are a transit peptide targeting the chloroplast; the sequence is MASMMSNAAVVGRTTPAQASMVAPFTGLKSVSAFPVTKKSNDITSIASNGGRVQ.

The protein belongs to the RuBisCO small chain family. Heterohexadecamer of 8 large and 8 small subunits.

The protein localises to the plastid. The protein resides in the chloroplast. Its function is as follows. RuBisCO catalyzes two reactions: the carboxylation of D-ribulose 1,5-bisphosphate, the primary event in carbon dioxide fixation, as well as the oxidative fragmentation of the pentose substrate. Both reactions occur simultaneously and in competition at the same active site. Although the small subunit is not catalytic it is essential for maximal activity. In Mesembryanthemum crystallinum (Common ice plant), this protein is Ribulose bisphosphate carboxylase small subunit, chloroplastic 2.